The following is a 362-amino-acid chain: 2-aminoethylphosphonate--pyruvate transaminase (362 aa).

The residue at position 193 (Lys193) is an N6-(pyridoxal phosphate)lysine.

This sequence belongs to the class-V pyridoxal-phosphate-dependent aminotransferase family. PhnW subfamily. In terms of assembly, homodimer. Pyridoxal 5'-phosphate is required as a cofactor.

The catalysed reaction is (2-aminoethyl)phosphonate + pyruvate = phosphonoacetaldehyde + L-alanine. In terms of biological role, involved in phosphonate degradation. The protein is 2-aminoethylphosphonate--pyruvate transaminase of Phocaeicola vulgatus (strain ATCC 8482 / DSM 1447 / JCM 5826 / CCUG 4940 / NBRC 14291 / NCTC 11154) (Bacteroides vulgatus).